A 398-amino-acid chain; its full sequence is MARNIKVEELLQTPIEKQQIELVERKGIGHPDSISDGLAEAVSRALCREYITKCGAVLHHNTDETQIVAGRSSPKFGGGEVLQPIYMLLVGRATKEFEGAELATESVALKAARNYLRNTMVNMDLERDVIIDCKLGTGSSDLRDVFKRDRVPMANDTSFGVGHAPFSELENIVYNTERQLLTDLKSRMPAIGEDMKIMGLRDGDDISLTICSGMIGRYVDDLDSYINMTQEMKTYTEELAARYTERNVNVFVNTADNLKASCVFLTVTGTSAEMGDDGSVGRGNRCNGLITPNRPMSMEATSGKNPINHIGKIYNLLSTQMARDIVKQVPDVQDVYIRLLSQIGKPIDQPLVASAQIIPKEGTSFANVKSEAEVVIDDWLSNVTKITEMVIRGELNTF.

Residue 136–141 (GTGSSD) coordinates ATP.

This sequence belongs to the AdoMet synthase 2 family. Mg(2+) serves as cofactor.

It catalyses the reaction L-methionine + ATP + H2O = S-adenosyl-L-methionine + phosphate + diphosphate. The protein operates within amino-acid biosynthesis; S-adenosyl-L-methionine biosynthesis; S-adenosyl-L-methionine from L-methionine: step 1/1. Catalyzes the formation of S-adenosylmethionine from methionine and ATP. The protein is S-adenosylmethionine synthase of Methanosarcina mazei (strain ATCC BAA-159 / DSM 3647 / Goe1 / Go1 / JCM 11833 / OCM 88) (Methanosarcina frisia).